We begin with the raw amino-acid sequence, 337 residues long: Fructose-1,6-bisphosphatase class 1 (337 aa).

4 residues coordinate Mg(2+): Glu-90, Asp-112, Leu-114, and Asp-115. Residues 115–118 (DGSS), Asn-211, and Lys-277 each bind substrate. Position 283 (Glu-283) interacts with Mg(2+).

This sequence belongs to the FBPase class 1 family. In terms of assembly, homotetramer. It depends on Mg(2+) as a cofactor.

It is found in the cytoplasm. It catalyses the reaction beta-D-fructose 1,6-bisphosphate + H2O = beta-D-fructose 6-phosphate + phosphate. Its pathway is carbohydrate biosynthesis; gluconeogenesis. The polypeptide is Fructose-1,6-bisphosphatase class 1 (Azotobacter vinelandii (strain DJ / ATCC BAA-1303)).